Reading from the N-terminus, the 312-residue chain is MNQKLKVAIIGSGNIGTDLMIKVLRNAKYLEMGAMVGIDAASDGLARAQRMGVTTTYAGVEGLIKLPEFADIDFVFDATSASAHVQNEALLRQAKPGIRLIDLTPAAIGPYCVPVVNLEEHLGKLNVNMVTCGGQATIPMVAAVSRVAKVHYAEIVASISSKSAGPGTRANIDEFTETTSKAIEVIGGAAKGKAIIIMNPAEPPLIMRDTVYVLSAAADQAAVAASVAEMVQAVQAYVPGYRLKQQVQFDVIPESAPLNIPGLGRFSGLKTSVFLEVEGAAHYLPAYAGNLDIMTSAALATAERMAQSMLNA.

Position 12 to 15 (Ser12 to Ile15) interacts with NAD(+). Catalysis depends on Cys132, which acts as the Acyl-thioester intermediate. NAD(+) contacts are provided by residues Ser163 to Asn171 and Asn290.

It belongs to the acetaldehyde dehydrogenase family. As to quaternary structure, heterotetramer composed of two DmpG (aldolase) and two DmpF (dehydrogenase) subunits, which allows a direct channeling of acetaldehyde between the two active sites.

It carries out the reaction acetaldehyde + NAD(+) + CoA = acetyl-CoA + NADH + H(+). It participates in aromatic compound metabolism; phenol degradation. With respect to regulation, is not activated by Mn(2+), Mg(2+), Ca(2+), Zn(2+) or Co(2+). Its function is as follows. Catalyzes the conversion of acetaldehyde to acetyl-CoA, using NAD(+) and coenzyme A. Can also act on propanal and butanal to form propanoyl-CoA and butanoyl-CoA, respectively. Is the final enzyme in the meta-cleavage pathway for the degradation of aromatic compounds such as phenols, cresols and catechols. NADP(+) can replace NAD(+) but the rate of reaction is much slower. The sequence is that of Acetaldehyde dehydrogenase (dmpF) from Pseudomonas sp. (strain CF600).